The primary structure comprises 138 residues: Probable glycine cleavage system H protein 1 (138 aa).

A Lipoyl-binding domain is found at 30–112 (IATVGITDYA…YGRGWIFKLK (83 aa)). At K71 the chain carries N6-lipoyllysine.

This sequence belongs to the GcvH family. As to quaternary structure, the glycine cleavage system is composed of four proteins: P, T, L and H. (R)-lipoate serves as cofactor.

Functionally, the glycine cleavage system catalyzes the degradation of glycine. The H protein shuttles the methylamine group of glycine from the P protein to the T protein. In Sulfolobus acidocaldarius (strain ATCC 33909 / DSM 639 / JCM 8929 / NBRC 15157 / NCIMB 11770), this protein is Probable glycine cleavage system H protein 1.